The primary structure comprises 379 residues: UDP-4-amino-4-deoxy-L-arabinose--oxoglutarate aminotransferase (379 aa).

Position 182 is an N6-(pyridoxal phosphate)lysine (K182).

It belongs to the DegT/DnrJ/EryC1 family. ArnB subfamily. As to quaternary structure, homodimer. Requires pyridoxal 5'-phosphate as cofactor.

It carries out the reaction UDP-4-amino-4-deoxy-beta-L-arabinose + 2-oxoglutarate = UDP-beta-L-threo-pentopyranos-4-ulose + L-glutamate. It functions in the pathway nucleotide-sugar biosynthesis; UDP-4-deoxy-4-formamido-beta-L-arabinose biosynthesis; UDP-4-deoxy-4-formamido-beta-L-arabinose from UDP-alpha-D-glucuronate: step 2/3. It participates in bacterial outer membrane biogenesis; lipopolysaccharide biosynthesis. Catalyzes the conversion of UDP-4-keto-arabinose (UDP-Ara4O) to UDP-4-amino-4-deoxy-L-arabinose (UDP-L-Ara4N). The modified arabinose is attached to lipid A and is required for resistance to polymyxin and cationic antimicrobial peptides. The chain is UDP-4-amino-4-deoxy-L-arabinose--oxoglutarate aminotransferase from Escherichia coli O7:K1 (strain IAI39 / ExPEC).